The primary structure comprises 82 residues: Penaeidin-3a (82 aa).

A signal peptide spans 1–19; it reads MRLVVCLVFLASFALVCQG. Gln20 carries the post-translational modification Pyrrolidone carboxylic acid. Cystine bridges form between Cys51–Cys66, Cys55–Cys73, and Cys67–Cys74. Ser81 carries the serine amide modification.

The N-terminus forms pyrrolidone carboxylic acid. As to expression, higher expression in hemocytes and to a lesser extent in heart, testis, gills, intestine, lymphoid organ and hepatopancreas. Traces in eyes and subcuticular epithelium. Not present in the brain.

The protein resides in the cytoplasmic granule. Antibacterial activity against M.luteus and E.coli bacteria. Antifungal activity against N.crassa and F.oxysporum. Presents chitin-binding activity. This is Penaeidin-3a from Penaeus vannamei (Whiteleg shrimp).